The chain runs to 372 residues: UDP-N-acetylglucosamine--N-acetylmuramyl-(pentapeptide) pyrophosphoryl-undecaprenol N-acetylglucosamine transferase (372 aa).

UDP-N-acetyl-alpha-D-glucosamine-binding positions include 15–17 (TGG), Asn126, Arg169, Ser197, and Gln299.

This sequence belongs to the glycosyltransferase 28 family. MurG subfamily.

The protein resides in the cell inner membrane. The enzyme catalyses di-trans,octa-cis-undecaprenyl diphospho-N-acetyl-alpha-D-muramoyl-L-alanyl-D-glutamyl-meso-2,6-diaminopimeloyl-D-alanyl-D-alanine + UDP-N-acetyl-alpha-D-glucosamine = di-trans,octa-cis-undecaprenyl diphospho-[N-acetyl-alpha-D-glucosaminyl-(1-&gt;4)]-N-acetyl-alpha-D-muramoyl-L-alanyl-D-glutamyl-meso-2,6-diaminopimeloyl-D-alanyl-D-alanine + UDP + H(+). The protein operates within cell wall biogenesis; peptidoglycan biosynthesis. In terms of biological role, cell wall formation. Catalyzes the transfer of a GlcNAc subunit on undecaprenyl-pyrophosphoryl-MurNAc-pentapeptide (lipid intermediate I) to form undecaprenyl-pyrophosphoryl-MurNAc-(pentapeptide)GlcNAc (lipid intermediate II). This Methylobacterium sp. (strain 4-46) protein is UDP-N-acetylglucosamine--N-acetylmuramyl-(pentapeptide) pyrophosphoryl-undecaprenol N-acetylglucosamine transferase.